The chain runs to 134 residues: MTGGGKSGGKASGSKNAQSRSSKAGLAFPVGRVHRLLRKGNYAQRVGAGAPVYLAAVLEYLAAEILELAGNAARDNKKTRIIPRHLQLAIRNDEELNKLLGHVTIAQGGVLPNIHQNLLPKKTGKTGKTSSMEL.

Over residues 1 to 11 (MTGGGKSGGKA) the composition is skewed to gly residues. Positions 1–24 (MTGGGKSGGKASGSKNAQSRSSKA) are disordered. 2 positions are modified to N6-acetyllysine: K6 and K10. The residue at position 107 (Q107) is an N5-methylglutamine.

This sequence belongs to the histone H2A family. As to quaternary structure, the nucleosome is a histone octamer containing two molecules each of H2A, H2B, H3 and H4 assembled in one H3-H4 heterotetramer and two H2A-H2B heterodimers. The octamer wraps approximately 147 bp of DNA. Acetylated by ESA1 to form H2AK4ac and H2AK7ac.

The protein localises to the nucleus. The protein resides in the chromosome. Core component of nucleosome. Nucleosomes wrap and compact DNA into chromatin, limiting DNA accessibility to the cellular machineries which require DNA as a template. Histones thereby play a central role in transcription regulation, DNA repair, DNA replication and chromosomal stability. DNA accessibility is regulated via a complex set of post-translational modifications of histones, also called histone code, and nucleosome remodeling. The polypeptide is Histone H2A (HTA1) (Gibberella zeae (strain ATCC MYA-4620 / CBS 123657 / FGSC 9075 / NRRL 31084 / PH-1) (Wheat head blight fungus)).